A 119-amino-acid polypeptide reads, in one-letter code: Large ribosomal subunit protein uL18 (119 aa).

This sequence belongs to the universal ribosomal protein uL18 family. Part of the 50S ribosomal subunit; part of the 5S rRNA/L5/L18/L25 subcomplex. Contacts the 5S and 23S rRNAs.

Its function is as follows. This is one of the proteins that bind and probably mediate the attachment of the 5S RNA into the large ribosomal subunit, where it forms part of the central protuberance. The chain is Large ribosomal subunit protein uL18 from Sorangium cellulosum (strain So ce56) (Polyangium cellulosum (strain So ce56)).